The chain runs to 512 residues: Glycosyltransferase sdnJ (512 aa).

The signal sequence occupies residues 1 to 24; the sequence is MHAKRPSVLFFTISDFGYVNVVLA. N-linked (GlcNAc...) asparagine glycosylation is present at asparagine 207.

Belongs to the UDP-glycosyltransferase family.

It catalyses the reaction sordaricin + GDP-6-deoxy-alpha-D-altrose = 4'-O-demethylsordarin + GDP + H(+). It participates in antibiotic biosynthesis. Its function is as follows. Glycosyltransferase; part of the gene cluster that mediates the biosynthesis of sordarin and hypoxysordarin, glycoside antibiotics with a unique tetracyclic diterpene aglycone structure. First, the geranylgeranyl diphosphate synthase sdnC constructs GGDP from farnesyl diphosphate and isopentenyl diphosphate. The diterpene cyclase sdnA then catalyzes the cyclization of GGDP to afford cycloaraneosene. Cycloaraneosene is then hydroxylated four times by the putative cytochrome P450 monooxygenases sdnB, sdnE, sdnF and sdnH to give a hydroxylated cycloaraneosene derivative such as cycloaraneosene-8,9,13,19-tetraol. Although the order of the hydroxylations is unclear, at least C8, C9 and C13 of the cycloaraneosene skeleton are hydroxylated before the sordaricin formation. Dehydration of the 13-hydroxy group of the hydroxylated cycloaraneosene derivative might be catalyzed by an unassigned hypothetical protein such as sdnG and sdnP to construct the cyclopentadiene moiety. The FAD-dependent oxidoreductase sdnN is proposed to catalyze the oxidation at C9 of the hydroxylated cycloaraneosene derivative and also catalyze the Baeyer-Villiger oxidation to give the lactone intermediate. The presumed lactone intermediate would be hydrolyzed to give an acrolein moiety and a carboxylate moiety. Then, [4+2]cycloaddition would occur between the acrolein moiety and the cyclopentadiene moiety to give sordaricin. SdnN might also be involved in the [4+2]cycloaddition after the hypothesized oxidation to accommodate the oxidized product and prompt the [4+2]cycloaddition. GDP-6-deoxy-D-altrose may be biosynthesized from GDP-D-mannose by the putative GDP-mannose-4,6-dehydratase sdnI and the short-chain dehydrogenase sdnK. The glycosyltransferase sdnJ catalyzes the attachment of 6-deoxy-D-altrose onto the 19-hydroxy group of sordaricin to give 4'-O-demethylsordarin. The methyltransferase sdnD would complete the biosynthesis of sordarin. Sordarin can be further modified into hypoxysordarin. The unique acyl chain at the 3'-hydroxy group of hypoxysordarin would be constructed by an iterative type I PKS sdnO and the trans-acting polyketide methyltransferase sdnL. SdnL would be responsible for the introduction of an alpha-methyl group of the polyketide chain. Alternatively, the beta-lactamase-like protein sdnR might be responsible for the cleavage and transfer of the polyketide chain from the PKS sdnO to sordarin. Two putative cytochrome P450 monooxygenases, sdnQ and sdnT, might catalyze the epoxidations of the polyketide chain to complete the biosynthesis of hypoxysordarin. Transcriptional regulators sdnM and sdnS are presumably encoded for the transcriptional regulation of the expression of the sdn gene cluster. This chain is Glycosyltransferase sdnJ, found in Sordaria araneosa (Pleurage araneosa).